The primary structure comprises 397 residues: Transaldolase (397 aa).

The active-site Schiff-base intermediate with substrate is Lys136.

Belongs to the transaldolase family. Type 1 subfamily. In terms of assembly, homodimer.

It localises to the cytoplasm. It carries out the reaction D-sedoheptulose 7-phosphate + D-glyceraldehyde 3-phosphate = D-erythrose 4-phosphate + beta-D-fructose 6-phosphate. It participates in carbohydrate degradation; pentose phosphate pathway; D-glyceraldehyde 3-phosphate and beta-D-fructose 6-phosphate from D-ribose 5-phosphate and D-xylulose 5-phosphate (non-oxidative stage): step 2/3. Functionally, transaldolase is important for the balance of metabolites in the pentose-phosphate pathway. In Synechococcus sp. (strain ATCC 27144 / PCC 6301 / SAUG 1402/1) (Anacystis nidulans), this protein is Transaldolase.